The sequence spans 237 residues: B3 domain-containing protein Os06g0194400 (237 aa).

Disordered stretches follow at residues 1 to 23 (MIEAESQMAEAASYEEQRRRQVE) and 38 to 82 (SAAV…LPEK). The segment at residues 139-230 (FVKPMLQSHV…KFKVYIIRAS (92 aa)) is a DNA-binding region (TF-B3).

It localises to the nucleus. The sequence is that of B3 domain-containing protein Os06g0194400 from Oryza sativa subsp. japonica (Rice).